Here is a 344-residue protein sequence, read N- to C-terminus: Dihydroorotase (344 aa).

Histidine 14 and histidine 16 together coordinate Zn(2+). Substrate contacts are provided by residues 16-18 and asparagine 42; that span reads HLR. The Zn(2+) site is built by lysine 100, histidine 137, and histidine 175. An N6-carboxylysine modification is found at lysine 100. Histidine 137 lines the substrate pocket. Leucine 220 provides a ligand contact to substrate. A Zn(2+)-binding site is contributed by aspartate 248. Aspartate 248 is a catalytic residue. Positions 252 and 264 each coordinate substrate.

The protein belongs to the metallo-dependent hydrolases superfamily. DHOase family. Class II DHOase subfamily. Homodimer. It depends on Zn(2+) as a cofactor.

The catalysed reaction is (S)-dihydroorotate + H2O = N-carbamoyl-L-aspartate + H(+). Its pathway is pyrimidine metabolism; UMP biosynthesis via de novo pathway; (S)-dihydroorotate from bicarbonate: step 3/3. Catalyzes the reversible cyclization of carbamoyl aspartate to dihydroorotate. This Cupriavidus taiwanensis (strain DSM 17343 / BCRC 17206 / CCUG 44338 / CIP 107171 / LMG 19424 / R1) (Ralstonia taiwanensis (strain LMG 19424)) protein is Dihydroorotase.